The following is an 831-amino-acid chain: uncharacterized protein (831 aa).

A disordered region spans residues 285-311; the sequence is ALNLKRQQLKEEQKEQQSTGDRSDVST. Position 470–477 (470–477) interacts with ATP; the sequence is GDTGNGKS.

This is an uncharacterized protein from Bacillus subtilis (strain 168).